The sequence spans 138 residues: Large ribosomal subunit protein uL16c (138 aa).

The protein belongs to the universal ribosomal protein uL16 family. In terms of assembly, part of the 50S ribosomal subunit.

It localises to the plastid. The protein resides in the chloroplast. This Emiliania huxleyi (Coccolithophore) protein is Large ribosomal subunit protein uL16c.